A 430-amino-acid polypeptide reads, in one-letter code: Tapasin (430 aa).

The N-terminal stretch at 1 to 15 (MAAGLRLLLAGLCWS) is a signal peptide. Over 16–399 (QFRVEDAASP…TEGPHLEDIT (384 aa)) the chain is Lumenal. Cys-34 and Cys-99 are oxidised to a cystine. A disordered region spans residues 61 to 128 (GDAETPPEPG…PDARSPPTAG (68 aa)). Asn-78 carries N-linked (GlcNAc...) asparagine glycosylation. A compositionally biased stretch (polar residues) spans 101–111 (LNPTNPQTGSD). Ig-like C1-type domains lie at 139–273 (PQYG…LQLH) and 278–382 (PKVT…MRVS). Cys-299 and Cys-368 are oxidised to a cystine. The tract at residues 316 to 342 (RAGGSGTSQSPRDTVMDSWTSGHRQAA) is disordered. Residues 322-338 (TSQSPRDTVMDSWTSGH) show a composition bias toward polar residues. The chain crosses the membrane as a helical span at residues 400-417 (GLFLVAFVLCGLIRWLYP). Residues 418-430 (KAARPKEETKKSQ) lie on the Cytoplasmic side of the membrane.

As to quaternary structure, interacts with TAP1 and is thus a subunit of the TAP complex. Interaction with TAP1 is TAP2 independent and is required for efficient peptide-TAP interaction. Obligatory mediator for the interaction between newly assembled MHC class I molecules, calreticulin, ERp57 and TAP. Up to 4 MHC class I/tapasin complexes bind to 1 TAP.

Its subcellular location is the endoplasmic reticulum membrane. Involved in the association of MHC class I with transporter associated with antigen processing (TAP) and in the assembly of MHC class I with peptide (peptide loading). The sequence is that of Tapasin (TAPBP) from Gallus gallus (Chicken).